Consider the following 877-residue polypeptide: Protein P (877 aa).

The tract at residues 1 to 183 (MHPFSQLFRN…GKPYSWGHRQ (183 aa)) is terminal protein domain (TP). The spacer stretch occupies residues 184–382 (LEQHNGQQHE…YCLHHIVSSL (199 aa)). Over residues 185–198 (EQHNGQQHESHLQS) the composition is skewed to basic and acidic residues. Residues 185–347 (EQHNGQQHES…PSSSGLCGGT (163 aa)) are disordered. The segment covering 233–242 (FGESQKSART) has biased composition (polar residues). Residues 267–281 (QQGSSQVSSPRSKSS) show a composition bias toward low complexity. Polar residues-rich tracts occupy residues 282–302 (NFRNQTQANHSSWNQRHPTWY) and 338–347 (PSSSGLCGGT). Residues 383 to 723 (EDWGPCTISG…YAELWPVARQ (341 aa)) are polymerase/reverse transcriptase domain (RT). The 242-residue stretch at 393 to 634 (DVTIRSPRTP…HHLHFMGYVI (242 aa)) folds into the Reverse transcriptase domain. Residues Asp-465, Asp-585, and Asp-586 each coordinate Mg(2+).

The protein belongs to the hepadnaviridae P protein family.

It carries out the reaction DNA(n) + a 2'-deoxyribonucleoside 5'-triphosphate = DNA(n+1) + diphosphate. The enzyme catalyses Endonucleolytic cleavage to 5'-phosphomonoester.. With respect to regulation, activated by host HSP70 and HSP40 in vitro to be able to bind the epsilon loop of the pgRNA. Because deletion of the RNase H region renders the protein partly chaperone-independent, the chaperones may be needed indirectly to relieve occlusion of the RNA-binding site by this domain. Inhibited by several reverse-transcriptase inhibitors: Lamivudine, Adefovir and Entecavir. Functionally, multifunctional enzyme that converts the viral RNA genome into dsDNA in viral cytoplasmic capsids. This enzyme displays a DNA polymerase activity that can copy either DNA or RNA templates, and a ribonuclease H (RNase H) activity that cleaves the RNA strand of RNA-DNA heteroduplexes in a partially processive 3'- to 5'-endonucleasic mode. Neo-synthesized pregenomic RNA (pgRNA) are encapsidated together with the P protein, and reverse-transcribed inside the nucleocapsid. Initiation of reverse-transcription occurs first by binding the epsilon loop on the pgRNA genome, and is initiated by protein priming, thereby the 5'-end of (-)DNA is covalently linked to P protein. Partial (+)DNA is synthesized from the (-)DNA template and generates the relaxed circular DNA (RC-DNA) genome. After budding and infection, the RC-DNA migrates in the nucleus, and is converted into a plasmid-like covalently closed circular DNA (cccDNA). The activity of P protein does not seem to be necessary for cccDNA generation, and is presumably released from (+)DNA by host nuclear DNA repair machinery. The polypeptide is Protein P (Arctic squirrel hepatitis virus (ASHV)).